The chain runs to 178 residues: ATP-dependent protease subunit HslV (178 aa).

Residue Thr7 is part of the active site. Residues Gly162, Cys165, and Thr168 each contribute to the Na(+) site.

It belongs to the peptidase T1B family. HslV subfamily. As to quaternary structure, a double ring-shaped homohexamer of HslV is capped on each side by a ring-shaped HslU homohexamer. The assembly of the HslU/HslV complex is dependent on binding of ATP.

The protein localises to the cytoplasm. The enzyme catalyses ATP-dependent cleavage of peptide bonds with broad specificity.. Its activity is regulated as follows. Allosterically activated by HslU binding. Its function is as follows. Protease subunit of a proteasome-like degradation complex believed to be a general protein degrading machinery. This chain is ATP-dependent protease subunit HslV, found in Ralstonia nicotianae (strain ATCC BAA-1114 / GMI1000) (Ralstonia solanacearum).